The primary structure comprises 238 residues: Orotidine 5'-phosphate decarboxylase (238 aa).

Substrate is bound by residues D10, K32, D59–T68, T122, R184, Q193, G213, and R214. Residue K61 is the Proton donor of the active site.

It belongs to the OMP decarboxylase family. Type 1 subfamily. Homodimer.

It carries out the reaction orotidine 5'-phosphate + H(+) = UMP + CO2. It participates in pyrimidine metabolism; UMP biosynthesis via de novo pathway; UMP from orotate: step 2/2. Functionally, catalyzes the decarboxylation of orotidine 5'-monophosphate (OMP) to uridine 5'-monophosphate (UMP). This is Orotidine 5'-phosphate decarboxylase from Bacillus cereus (strain Q1).